Reading from the N-terminus, the 480-residue chain is Gasdermin-C4 (480 aa).

Residues 1 to 226 (MGYSFDRASK…TCVILPSATK (226 aa)) are triggers pyroptosis.

It belongs to the gasdermin family. Homooligomer; homooligomeric ring-shaped pore complex containing 27-28 subunits when inserted in the membrane. In terms of processing, cleavage by CASP8 relieves autoinhibition by releasing the N-terminal moiety (Gasdermin-C4, N-terminal) that initiates pyroptosis. Palmitoylated.

It is found in the cytoplasm. Its subcellular location is the cytosol. It localises to the cell membrane. Its activity is regulated as follows. The full-length protein before cleavage is inactive: intramolecular interactions between N- and C-terminal domains mediate autoinhibition in the absence of activation signal. The intrinsic pyroptosis-inducing activity is carried by the released N-terminal moiety (Gasdermin-C4, N-terminal) following cleavage by caspase CASP8. In terms of biological role, this form constitutes the precursor of the pore-forming protein: upon cleavage, the released N-terminal moiety (Gasdermin-C4, N-terminal) binds to membranes and forms pores, triggering pyroptosis. Its function is as follows. Pore-forming protein that causes membrane permeabilization and pyroptosis. Produced by the cleavage of gasdermin-C4 by caspase CASP8 in response to death signals. After cleavage, moves to the plasma membrane where it strongly binds to membrane inner leaflet lipids. Homooligomerizes within the membrane and forms pores of 10-15 nanometers (nm) of inner diameter, triggering pyroptosis. This Mus musculus (Mouse) protein is Gasdermin-C4.